A 316-amino-acid polypeptide reads, in one-letter code: Probable 5-dehydro-4-deoxyglucarate dehydratase 1 (316 aa).

It belongs to the DapA family.

The enzyme catalyses 5-dehydro-4-deoxy-D-glucarate + H(+) = 2,5-dioxopentanoate + CO2 + H2O. It participates in carbohydrate acid metabolism; D-glucarate degradation; 2,5-dioxopentanoate from D-glucarate: step 2/2. The sequence is that of Probable 5-dehydro-4-deoxyglucarate dehydratase 1 from Streptomyces coelicolor (strain ATCC BAA-471 / A3(2) / M145).